The sequence spans 289 residues: Ketose 3-epimerase (289 aa).

Catalysis depends on E146, which acts as the Proton donor/acceptor. Residue E146 coordinates Mn(2+). Substrate contacts are provided by residues E152 and 179–182 (DTYH). The Mn(2+) site is built by D179 and H205. Substrate is bound at residue R211. E240 acts as the Proton donor/acceptor in catalysis. Mn(2+) is bound at residue E240.

This sequence belongs to the hyi family. Homotetramer. Requires Mg(2+) as cofactor. The cofactor is Mn(2+). Co(2+) serves as cofactor.

It carries out the reaction L-ribulose = L-xylulose. The enzyme catalyses D-allulose = keto-D-fructose. It catalyses the reaction keto-L-tagatose = keto-L-sorbose. The catalysed reaction is D-ribulose = D-xylulose. It carries out the reaction L-allulose = keto-L-fructose. The enzyme catalyses keto-D-tagatose = keto-D-sorbose. Catalyzes the reversible C-3 epimerization of several ketoses. Shows the highest enzymatic activity for the epimerization of L-ribulose to L-xylulose. Is also able to convert D-allulose (also known as D-psicose) to D-fructose and, to a lesser extent, L-tagatose to L-sorbose, D-ribulose to D-xylulose, L-allulose to L-fructose and D-tagatose to D-sorbose. This Arthrobacter globiformis protein is Ketose 3-epimerase.